Reading from the N-terminus, the 888-residue chain is Molybdenum cofactor sulfurase (888 aa).

Ser-34 is modified (phosphoserine). At Lys-264 the chain carries N6-(pyridoxal phosphate)lysine. Cys-424 is an active-site residue. A phosphoserine mark is found at Ser-528 and Ser-530. In terms of domain architecture, MOSC spans 706 to 867 (KQSSNSQRNA…LSVGSQVLPV (162 aa)).

Belongs to the class-V pyridoxal-phosphate-dependent aminotransferase family. MOCOS subfamily. Requires pyridoxal 5'-phosphate as cofactor.

The enzyme catalyses Mo-molybdopterin + L-cysteine + AH2 = thio-Mo-molybdopterin + L-alanine + A + H2O. The protein operates within cofactor biosynthesis; molybdopterin biosynthesis. Functionally, sulfurates the molybdenum cofactor. Sulfation of molybdenum is essential for xanthine dehydrogenase (XDH) and aldehyde oxidase (ADO) enzymes in which molybdenum cofactor is liganded by 1 oxygen and 1 sulfur atom in active form. In vitro, the C-terminal domain is able to reduce N-hydroxylated prodrugs, such as benzamidoxime. This is Molybdenum cofactor sulfurase from Homo sapiens (Human).